The sequence spans 169 residues: uncharacterized protein (169 aa).

Residues 97 to 117 form a helical membrane-spanning segment; it reads IVIFCILVIVAFVIWLVVWLF. The disordered stretch occupies residues 137–169; sequence NYSGLPTPQPTPTHYPAEQYSYDPARDRDNYRY. A compositionally biased stretch (basic and acidic residues) spans 160-169; the sequence is PARDRDNYRY.

It localises to the membrane. This is an uncharacterized protein from Caenorhabditis elegans.